Consider the following 297-residue polypeptide: Protein BCCIP homolog (297 aa).

The disordered stretch occupies residues 1-40; the sequence is MSANKQKKLSTMEVDPNEDVSSSSEDDDDDEPHPDAYKGN.

The protein belongs to the BCP1 family.

In Drosophila melanogaster (Fruit fly), this protein is Protein BCCIP homolog.